Consider the following 510-residue polypeptide: MIWHVQNENFILDSTRIFMKAFHLLLFDGSLIFPECILIFGLILLLMIDLTSDQKDIPWLYFISSTSLVMSITALLFRWREEPMISFSGNFQTNNFNEIFQFLILLCSTLCIPLSVEYIECTEMAITEFLLFVLTATLGGMFLCGANDLITIFVALECFSLCSYLLSGYTKKDVRSNEATMKYLLMGGASSSILVYGFSWLYGLSGGEIELQEIVNGLINTQMYNSPGISIALIFITVGIGFKLSLAPFHQWTPDVYEGSPTPVVAFLSVTSKVAALALATRIFDIPFYFSSNEWHLLLEILAILSMILGNLIAITQTSMKRMLAYSSIGQIGYVIIGIIVGDSNDGYASMITYMLFYISMNLGTFACIVLFGLRTGTDNIRDYAGLYTKDPFLALSLALCLLSLGGLPPLAGFFGKLYLFWCGWQAGLYFLVLIGLLTSVVSIYYYLKIIKLLMTGRNQEITPHVRNYRRSPLRSNNSIELSMIVCVIASTILGISMNPIIAIAQDSLF.

14 helical membrane passes run Leu31–Thr51, Ile57–Phe77, Ile99–Ile119, Met124–Cys144, Leu149–Tyr169, Leu184–Leu204, Ile229–Phe249, Pro261–Thr281, Trp295–Ile315, Met323–Asp343, Tyr354–Leu374, Ala395–Phe415, Leu418–Leu438, and Met484–Ile504.

This sequence belongs to the complex I subunit 2 family. In terms of assembly, NDH is composed of at least 16 different subunits, 5 of which are encoded in the nucleus.

It is found in the plastid. The protein localises to the chloroplast thylakoid membrane. The enzyme catalyses a plastoquinone + NADH + (n+1) H(+)(in) = a plastoquinol + NAD(+) + n H(+)(out). It carries out the reaction a plastoquinone + NADPH + (n+1) H(+)(in) = a plastoquinol + NADP(+) + n H(+)(out). Functionally, NDH shuttles electrons from NAD(P)H:plastoquinone, via FMN and iron-sulfur (Fe-S) centers, to quinones in the photosynthetic chain and possibly in a chloroplast respiratory chain. The immediate electron acceptor for the enzyme in this species is believed to be plastoquinone. Couples the redox reaction to proton translocation, and thus conserves the redox energy in a proton gradient. In Nicotiana tabacum (Common tobacco), this protein is NAD(P)H-quinone oxidoreductase subunit 2 A, chloroplastic.